Here is a 107-residue protein sequence, read N- to C-terminus: uncharacterized protein (107 aa).

3 helical membrane-spanning segments follow: residues 15 to 35 (TGSY…LGIS), 43 to 63 (LYRV…WLSY), and 87 to 107 (YFPS…IFCF).

It is found in the membrane. This is an uncharacterized protein from Saccharomyces cerevisiae (strain ATCC 204508 / S288c) (Baker's yeast).